The sequence spans 330 residues: Inositol 2-dehydrogenase (330 aa).

It belongs to the Gfo/Idh/MocA family.

It carries out the reaction myo-inositol + NAD(+) = scyllo-inosose + NADH + H(+). Its pathway is polyol metabolism; myo-inositol degradation into acetyl-CoA; acetyl-CoA from myo-inositol: step 1/7. Functionally, involved in the oxidation of myo-inositol (MI) to 2-keto-myo-inositol (2KMI or 2-inosose). The polypeptide is Inositol 2-dehydrogenase (idhA) (Rhizobium meliloti (strain 1021) (Ensifer meliloti)).